Here is a 20-residue protein sequence, read N- to C-terminus: 54 kDa cell wall protein (20 aa).

Residues 1–20 (KVPVDDQFRRVNNGGATDTR) are disordered.

The protein resides in the secreted. The protein localises to the cell wall. The chain is 54 kDa cell wall protein from Arabidopsis thaliana (Mouse-ear cress).